Reading from the N-terminus, the 295-residue chain is UDP-3-O-acyl-N-acetylglucosamine deacetylase (295 aa).

Positions 75, 232, and 236 each coordinate Zn(2+). H259 acts as the Proton donor in catalysis.

This sequence belongs to the LpxC family. Zn(2+) is required as a cofactor.

It catalyses the reaction a UDP-3-O-[(3R)-3-hydroxyacyl]-N-acetyl-alpha-D-glucosamine + H2O = a UDP-3-O-[(3R)-3-hydroxyacyl]-alpha-D-glucosamine + acetate. It functions in the pathway glycolipid biosynthesis; lipid IV(A) biosynthesis; lipid IV(A) from (3R)-3-hydroxytetradecanoyl-[acyl-carrier-protein] and UDP-N-acetyl-alpha-D-glucosamine: step 2/6. Its function is as follows. Catalyzes the hydrolysis of UDP-3-O-myristoyl-N-acetylglucosamine to form UDP-3-O-myristoylglucosamine and acetate, the committed step in lipid A biosynthesis. The protein is UDP-3-O-acyl-N-acetylglucosamine deacetylase of Helicobacter pylori (strain J99 / ATCC 700824) (Campylobacter pylori J99).